We begin with the raw amino-acid sequence, 1116 residues long: MKVDEEKAGVKKLDPTSYKRRQPEQDFPSIHIGFPVPSYSQRKSDSKGHLSGLQKVQWSLKPGKPQQELAGPGIRASSQGGAVDFTKRTRSPAAEQLQDILGEEDEAPNPTLFTEMDTLQHDGDQMEWKESARWIKFEEKVEEGGERWSKPHVSTLSLHSLFELRTCLQTGTVLLDLDSCSLPQIIDDVIEKQIEDGLLRPELRERVSYVLLRKHRHQTKKPIHRSLADIGKSVSTTNRSSARSSSAGPTLHRSTEDLRIRQSTSYGHLCHAQSRSMNDISHTPNTDQRKNKFMKKIPKDSEASNVLVGEVDFLDQPFIAFVRLVQSAMLGGVTEVPVPTRFLFILLGPSGRAKSYNEIGRAIATLMVDDLFSDVAYKARNREDLIAGIDEFLDEVIVLPPGEWDPNIRIEPPKKVPSADKRKSVFSLAEPGQMNGSVGGGGASAGGGGSGGGAGGSGAGGVGSGDEAEMPAMHEIGEELIWTGRFFGGLCLDVKRKLPWFPSDFYDGFHLQSISAVLFIYLGCITNAITFGGLLGDATDNYQGVMESFLGTAMAGSLFCLFSGQPLIILSSTGPILIFEKLLFDFSKANGLDYMEFRLWIGLHSAIQCLILVATDASFIIKYITRFTEEGFSTLISFIFIYDAIKKMIGAFKYYPINTDFKPDFITTYKCECVAPDTVNTTTVNASAPLAPNTNTSLYTPLNLTALDWSLLSKKECLSYGGRLLGSSCQFVPDLALMSFILFFGTYSMTLTLKKFKFSRYFPTKVRTLVADFSIVFSILLFCGIDACFGLQTPKLHVPSVIKPTRPDRGWFVAPFGKNPWWVYPASILPALLVTILIFMDQQITAVIVNRKENKLRKAAGYHLDLFWVGILMALCSFTGLPWYVAATVISIAHIDSLKMETETSAPGEQPQFLGVREQRVTGVMVFILTGISVFLAPILKYIPMPVLYGVFLYMGVASLNGIQFWERCKLFLMPAKHQPDHAFLRHVPLRRIHLFTLVQILCLALLWILKSTMAAIIFPVMILGLIIVRRLLDLIFSQHDLAWIDNILPEKDKKETDKKKKRRKEVHETAEKEVAMPQFLPPSVVKIPMEGIPSDPQNGIHCVARKRSSSWSYSL.

Over residues methionine 1 to aspartate 14 the composition is skewed to basic and acidic residues. Disordered regions lie at residues methionine 1–proline 92, proline 222–aspartate 257, and proline 431–glutamate 467. At methionine 1 to serine 515 the chain is on the cytoplasmic side. Positions serine 233–alanine 247 are enriched in low complexity. Gly residues predominate over residues serine 437–serine 464. The chain crosses the membrane as a helical span at residues alanine 516 to glycine 536. The Extracellular portion of the chain corresponds to aspartate 537–leucine 558. Residues phenylalanine 559 to phenylalanine 579 form a helical membrane-spanning segment. At glutamate 580–tryptophan 600 the chain is on the cytoplasmic side. Residues isoleucine 601 to isoleucine 621 traverse the membrane as a helical segment. The Extracellular portion of the chain corresponds to lysine 622 to glycine 631. A helical membrane pass occupies residues phenylalanine 632–phenylalanine 652. The Cytoplasmic portion of the chain corresponds to lysine 653–glutamine 730. A helical transmembrane segment spans residues phenylalanine 731–leucine 751. The Extracellular segment spans residues threonine 752 to threonine 768. Residues leucine 769–phenylalanine 789 traverse the membrane as a helical segment. The Cytoplasmic segment spans residues glycine 790–asparagine 819. The chain crosses the membrane as a helical span at residues proline 820–methionine 840. The Extracellular segment spans residues aspartate 841 to aspartate 865. The chain crosses the membrane as a helical span at residues leucine 866 to alanine 886. Residues alanine 887–threonine 922 lie on the Cytoplasmic side of the membrane. The chain crosses the membrane as a helical span at residues glycine 923 to isoleucine 943. Over proline 944–methionine 945 the chain is Extracellular. A helical membrane pass occupies residues proline 946 to tryptophan 966. The Cytoplasmic portion of the chain corresponds to glutamate 967–histidine 987. The next 2 helical transmembrane spans lie at valine 988–tryptophan 1008 and isoleucine 1009–valine 1029. Residues arginine 1030–leucine 1116 lie on the Cytoplasmic side of the membrane.

Belongs to the anion exchanger (TC 2.A.31) family.

It localises to the apical cell membrane. Its subcellular location is the basolateral cell membrane. It carries out the reaction 2 hydrogencarbonate(out) + Na(+)(out) = 2 hydrogencarbonate(in) + Na(+)(in). The catalysed reaction is 3 hydrogencarbonate(out) + Na(+)(out) = 3 hydrogencarbonate(in) + Na(+)(in). Its function is as follows. Mediates sodium- and bicarbonate-dependent electrogenic sodium bicarbonate cotransport, with a Na(+):HCO3(-) stoichiometry varying from 1:2 to 1:3. In Mus musculus (Mouse), this protein is Electrogenic sodium bicarbonate cotransporter 4 (Slc4a5).